Reading from the N-terminus, the 246-residue chain is Phosducin (246 aa).

The segment covering 1–14 has biased composition (acidic residues); the sequence is MEEAKSQSLEEDFE. The disordered stretch occupies residues 1–70; it reads MEEAKSQSLE…GKDSKERVSR (70 aa). In terms of domain architecture, Phosducin spans 1 to 244; the sequence is MEEAKSQSLE…LEHTKIEEED (244 aa). The segment covering 60-69 has biased composition (basic and acidic residues); that stretch reads NGKDSKERVS. A Phosphoserine; by PKA modification is found at S73. The tract at residues 111–246 is thioredoxin fold; sequence YGFVYELETG…HTKIEEEDVE (136 aa).

The protein belongs to the phosducin family. As to quaternary structure, forms a complex with the beta and gamma subunits of the GTP-binding protein, transducin. Interacts with CRX. Post-translationally, light-induced changes in cyclic nucleotide levels modulate the phosphorylation of this protein by cAMP kinase.

Its subcellular location is the cytoplasm. The protein localises to the cytosol. The protein resides in the nucleus. It localises to the cell projection. It is found in the cilium. Its subcellular location is the photoreceptor outer segment. The protein localises to the photoreceptor inner segment. In terms of biological role, may participate in the regulation of visual phototransduction or in the integration of photoreceptor metabolism. Inhibits the transcriptional activation activity of the cone-rod homeobox CRX. The polypeptide is Phosducin (PDC) (Homo sapiens (Human)).